We begin with the raw amino-acid sequence, 91 residues long: MSNQSKLNSAAYDQLNKDADRILHLIKVQMDNLTLPSCPLYEEVLDTQMFGLQKEVDFAVQLGLVDKEDGKQLMLRLEKELSKLHEAFTNV.

Belongs to the UPF0358 family.

This chain is UPF0358 protein SERP0701, found in Staphylococcus epidermidis (strain ATCC 35984 / DSM 28319 / BCRC 17069 / CCUG 31568 / BM 3577 / RP62A).